The primary structure comprises 184 residues: Photosystem I assembly protein Ycf4 (184 aa).

2 helical membrane-spanning segments follow: residues 22-42 (FFWA…GTSS) and 57-77 (IIFF…LFIS).

The protein belongs to the Ycf4 family.

It is found in the plastid. Its subcellular location is the chloroplast thylakoid membrane. In terms of biological role, seems to be required for the assembly of the photosystem I complex. This chain is Photosystem I assembly protein Ycf4, found in Aethionema cordifolium (Lebanon stonecress).